A 710-amino-acid polypeptide reads, in one-letter code: Polyribonucleotide nucleotidyltransferase (710 aa).

Mg(2+)-binding residues include D489 and D495. Positions 556-615 (PKIDTIKIDVDKIKVVIGKGGETIDKIIAETGVKIDIDDEGNVSIYSSDQAAINRTKEII) constitute a KH domain. An S1 motif domain is found at 625 to 693 (GEVYHAKVVR…EKGRVDASMK (69 aa)). Residues 691 to 710 (SMKALIPRPPKPEKKEEKHD) are disordered. The segment covering 700–710 (PKPEKKEEKHD) has biased composition (basic and acidic residues).

The protein belongs to the polyribonucleotide nucleotidyltransferase family. Mg(2+) is required as a cofactor.

It localises to the cytoplasm. It carries out the reaction RNA(n+1) + phosphate = RNA(n) + a ribonucleoside 5'-diphosphate. Functionally, involved in mRNA degradation. Catalyzes the phosphorolysis of single-stranded polyribonucleotides processively in the 3'- to 5'-direction. The chain is Polyribonucleotide nucleotidyltransferase from Streptococcus pyogenes serotype M2 (strain MGAS10270).